Consider the following 290-residue polypeptide: MAASVWSGYLTFGLISMPVRLFSGARGSRISFNQLHREDHARVKQQLVCSADGKVLERDEIVKGYEYRKGEYVIIDPEELKKIEPKTAKSMEILEFVKAEEVDPVYFETSYYLQPDEGGEKPYALLVQALKESDYMGIAKVTMHNREYTVFLRPHTSGIMLHTMYYEDEVRKMEAPKITSEVKPAEVKIAHQLIEALAGKFEPEKFHDVYEANVKKLIEAHLEGQDVEAVAKPAKPAKVVDLMDALKQSLAAMKDQKKGSRLAEVDKESTVQMTPKKPAVKERRGRKRVA.

The Ku domain maps to 11–183; that stretch reads TFGLISMPVR…EAPKITSEVK (173 aa). Residues 253–290 are disordered; sequence MKDQKKGSRLAEVDKESTVQMTPKKPAVKERRGRKRVA. Positions 254 to 269 are enriched in basic and acidic residues; sequence KDQKKGSRLAEVDKES.

The protein belongs to the prokaryotic Ku family. Homodimer. Interacts with LigD.

With LigD forms a non-homologous end joining (NHEJ) DNA repair enzyme, which repairs dsDNA breaks with reduced fidelity. Binds linear dsDNA with 5'- and 3'- overhangs but not closed circular dsDNA nor ssDNA. Recruits and stimulates the ligase activity of LigD. The chain is Non-homologous end joining protein Ku from Koribacter versatilis (strain Ellin345).